Here is a 35-residue protein sequence, read N- to C-terminus: Phospholipase A2 bitanarin (35 aa).

It belongs to the phospholipase A2 family. Group II subfamily. As to quaternary structure, monomer. It depends on Ca(2+) as a cofactor. Post-translationally, contains 14 disulfide bonds. In terms of tissue distribution, expressed by the venom gland.

The protein resides in the secreted. The enzyme catalyses a 1,2-diacyl-sn-glycero-3-phosphocholine + H2O = a 1-acyl-sn-glycero-3-phosphocholine + a fatty acid + H(+). Snake venom phospholipase A2 (PLA2) that is the first competitive blocker of nicotinic acetylcholine receptors (nAChRs). Competes with alpha-bungarotoxin for binding to nAChRs and acetylcholine binding proteins (AChBPs) and blocks acetylcholine-elicited current. PLA2 catalyzes the calcium-dependent hydrolysis of the 2-acyl groups in 3-sn-phosphoglycerides. This is Phospholipase A2 bitanarin from Bitis arietans (African puff adder).